The following is a 456-amino-acid chain: N(6)-adenosine-methyltransferase non-catalytic subunit METTL14 (456 aa).

The interval 45 to 76 (AETRETCRASYDTSAPNAKRKYQDEGETDEDK) is disordered. Interaction with METTL3 regions lie at residues 135–136 (RD) and 237–238 (SG). Residues 245-254 (RVCLRKWGYR) form a positively charged region required for RNA-binding region. Interaction with METTL3 stretches follow at residues 255–258 (RCED) and 278–287 (KAVFQRTKEH). The interval 297 to 298 (KR) is positively charged region required for RNA-binding. The segment at 308–312 (NVDID) is interaction with METTL3. Residues 393–456 (ERLRPKSPPP…GAHRGGFPPR (64 aa)) form a disordered region. Position 399 is a phosphoserine (serine 399). Positions 409–423 (GGGAPRGGGRGGTSA) are enriched in gly residues. Basic and acidic residues predominate over residues 425–440 (RGRERNRSNFRGERGG). The span at 441–450 (FRGGRGGAHR) shows a compositional bias: gly residues.

Belongs to the MT-A70-like family. Heterodimer; heterodimerizes with METTL3 to form an antiparallel heterodimer that constitutes an active methyltransferase. Component of the WMM complex, a N6-methyltransferase complex composed of a catalytic subcomplex, named MAC, and of an associated subcomplex, named MACOM. The MAC subcomplex is composed of METTL3 and METTL14. The MACOM subcomplex is composed of WTAP, ZC3H13, CBLL1/HAKAI, VIRMA, and, in some cases of RBM15 (RBM15 or RBM15B).

It is found in the nucleus. The METTL3-METTL14 heterodimer forms a N6-methyltransferase complex that methylates adenosine residues at the N(6) position of some mRNAs and regulates the circadian clock, differentiation of embryonic stem cells and cortical neurogenesis. In the heterodimer formed with METTL3, METTL14 constitutes the RNA-binding scaffold that recognizes the substrate rather than the catalytic core. N6-methyladenosine (m6A), which takes place at the 5'-[AG]GAC-3' consensus sites of some mRNAs, plays a role in mRNA stability and processing. M6A acts as a key regulator of mRNA stability by promoting mRNA destabilization and degradation. In embryonic stem cells (ESCs), m6A methylation of mRNAs encoding key naive pluripotency-promoting transcripts results in transcript destabilization. M6A regulates spermatogonial differentiation and meiosis and is essential for male fertility and spermatogenesis. M6A also regulates cortical neurogenesis: m6A methylation of transcripts related to transcription factors, neural stem cells, the cell cycle and neuronal differentiation during brain development promotes their destabilization and decay, promoting differentiation of radial glial cells. The polypeptide is N(6)-adenosine-methyltransferase non-catalytic subunit METTL14 (METTL14) (Bos taurus (Bovine)).